Here is a 372-residue protein sequence, read N- to C-terminus: NAD(P)H-quinone oxidoreductase subunit 1 (372 aa).

8 consecutive transmembrane segments (helical) span residues 27–47, 97–117, 130–150, 176–196, 204–224, 254–274, 308–328, and 351–371; these read AIWM…GVLV, WLFL…YLIV, VGIF…LMAG, LALS…IDIV, ILGW…IAAL, FALF…VFAV, SLGI…AILL, and VSLV…FAFG.

It belongs to the complex I subunit 1 family. In terms of assembly, NDH-1 is composed of at least 11 different subunits.

It is found in the cellular thylakoid membrane. The enzyme catalyses a plastoquinone + NADH + (n+1) H(+)(in) = a plastoquinol + NAD(+) + n H(+)(out). It catalyses the reaction a plastoquinone + NADPH + (n+1) H(+)(in) = a plastoquinol + NADP(+) + n H(+)(out). NDH-1 shuttles electrons from an unknown electron donor, via FMN and iron-sulfur (Fe-S) centers, to quinones in the respiratory and/or the photosynthetic chain. The immediate electron acceptor for the enzyme in this species is believed to be plastoquinone. Couples the redox reaction to proton translocation, and thus conserves the redox energy in a proton gradient. This chain is NAD(P)H-quinone oxidoreductase subunit 1, found in Microcystis aeruginosa (strain NIES-843 / IAM M-2473).